The primary structure comprises 178 residues: ATP-dependent protease subunit HslV (178 aa).

Thr5 is a catalytic residue. Residues Gly161, Cys164, and Thr167 each coordinate Na(+).

This sequence belongs to the peptidase T1B family. HslV subfamily. A double ring-shaped homohexamer of HslV is capped on each side by a ring-shaped HslU homohexamer. The assembly of the HslU/HslV complex is dependent on binding of ATP.

The protein resides in the cytoplasm. It catalyses the reaction ATP-dependent cleavage of peptide bonds with broad specificity.. With respect to regulation, allosterically activated by HslU binding. Protease subunit of a proteasome-like degradation complex believed to be a general protein degrading machinery. This Nitratiruptor sp. (strain SB155-2) protein is ATP-dependent protease subunit HslV.